We begin with the raw amino-acid sequence, 433 residues long: Citrate synthase, mitochondrial (433 aa).

Active-site residues include His-274 and His-320. Residue Arg-329 coordinates oxaloacetate. Asp-375 is a catalytic residue. The oxaloacetate site is built by Arg-401 and Arg-421.

This sequence belongs to the citrate synthase family. In terms of assembly, homodimer.

The protein localises to the mitochondrion matrix. It catalyses the reaction oxaloacetate + acetyl-CoA + H2O = citrate + CoA + H(+). It participates in carbohydrate metabolism; tricarboxylic acid cycle; isocitrate from oxaloacetate: step 1/2. Functionally, key enzyme of the Krebs tricarboxylic acid cycle which catalyzes the synthesis of citrate from acetyl coenzyme A and oxaloacetate. The polypeptide is Citrate synthase, mitochondrial (CS) (Gallus gallus (Chicken)).